A 240-amino-acid chain; its full sequence is Orotidine 5'-phosphate decarboxylase (240 aa).

Substrate contacts are provided by residues aspartate 10, lysine 33, 60–69 (DLKLHDIPNT), threonine 123, arginine 185, glutamine 194, glycine 214, and arginine 215. The Proton donor role is filled by lysine 62.

It belongs to the OMP decarboxylase family. Type 1 subfamily. In terms of assembly, homodimer.

It carries out the reaction orotidine 5'-phosphate + H(+) = UMP + CO2. It participates in pyrimidine metabolism; UMP biosynthesis via de novo pathway; UMP from orotate: step 2/2. In terms of biological role, catalyzes the decarboxylation of orotidine 5'-monophosphate (OMP) to uridine 5'-monophosphate (UMP). This is Orotidine 5'-phosphate decarboxylase from Lactobacillus delbrueckii subsp. bulgaricus (strain ATCC 11842 / DSM 20081 / BCRC 10696 / JCM 1002 / NBRC 13953 / NCIMB 11778 / NCTC 12712 / WDCM 00102 / Lb 14).